The sequence spans 354 residues: 4-hydroxy-3-methylbut-2-en-1-yl diphosphate synthase (flavodoxin) (354 aa).

[4Fe-4S] cluster is bound by residues Cys265, Cys268, Cys300, and Glu307.

It belongs to the IspG family. [4Fe-4S] cluster serves as cofactor.

The enzyme catalyses (2E)-4-hydroxy-3-methylbut-2-enyl diphosphate + oxidized [flavodoxin] + H2O + 2 H(+) = 2-C-methyl-D-erythritol 2,4-cyclic diphosphate + reduced [flavodoxin]. Its pathway is isoprenoid biosynthesis; isopentenyl diphosphate biosynthesis via DXP pathway; isopentenyl diphosphate from 1-deoxy-D-xylulose 5-phosphate: step 5/6. Functionally, converts 2C-methyl-D-erythritol 2,4-cyclodiphosphate (ME-2,4cPP) into 1-hydroxy-2-methyl-2-(E)-butenyl 4-diphosphate. The protein is 4-hydroxy-3-methylbut-2-en-1-yl diphosphate synthase (flavodoxin) of Hydrogenobaculum sp. (strain Y04AAS1).